Reading from the N-terminus, the 517-residue chain is Cytochrome P450 monooxygenase penP (517 aa).

The chain crosses the membrane as a helical span at residues 17 to 37 (GEATVIWILVALVLVAYLILP). Cys456 is a heme binding site. N-linked (GlcNAc...) asparagine glycosylation occurs at Asn501.

This sequence belongs to the cytochrome P450 family. Heme is required as a cofactor.

The protein localises to the membrane. It participates in secondary metabolite biosynthesis. Functionally, cytochrome P450 monooxygenase; part of the gene cluster that mediates the biosynthesis of the indole diterpenes penitrems. The geranylgeranyl diphosphate (GGPP) synthase penG catalyzes the first step in penitrem biosynthesis via conversion of farnesyl pyrophosphate and isopentyl pyrophosphate into geranylgeranyl pyrophosphate (GGPP). Condensation of indole-3-glycerol phosphate with GGPP by the prenyl transferase penC then forms 3-geranylgeranylindole (3-GGI). Epoxidation by the FAD-dependent monooxygenase penM leads to a epoxidized-GGI that is substrate of the terpene cyclase penB for cyclization to yield paspaline. Paspaline is subsequently converted to 13-desoxypaxilline by the cytochrome P450 monooxygenase penP, the latter being then converted to paxilline by the cytochrome P450 monooxygenase penQ. Paxilline is converted to beta-paxitriol via C-10 ketoreduction by the short-chain dehydrogenase PC-15 which can be monoprenylated at the C-20 by the indole diterpene prenyltransferase penD. A two-step elimination (acetylation and elimination) process performed by the O-acetyltransferase PC-16 and the P.simplicissimum ptmI-ortholog not yet identified in P.crustosum, leads to the production of the prenylated form of penijanthine. The FAD-linked oxidoreductase ptmO then converts the prenylated form of penijanthine into PC-M5 which is in turn transformed into PC-M4 by the aromatic dimethylallyltransferase PC-22. A series of oxidation steps involving 4 cytochrome P450 monooxygenases (PC-21, PC-05, PC-23, PC-20) and a FAD-dependent monooxygenase (PC-14) are required for the transformation of PC-M4 to penitrems A and E. Synthesis of these final products is proposed to proceed via penitrems D and C (PC-21, PC-05, PC-14) and penitrems B and F (PC-21, PC-05, PC-14, PC-23). This is Cytochrome P450 monooxygenase penP from Penicillium crustosum (Blue mold fungus).